The sequence spans 488 residues: Cobyric acid synthase (488 aa).

The GATase cobBQ-type domain occupies 248–441; sequence VLRVVVPALP…VHGLFDTPAA (194 aa). C328 serves as the catalytic Nucleophile. H433 is a catalytic residue.

This sequence belongs to the CobB/CobQ family. CobQ subfamily.

It functions in the pathway cofactor biosynthesis; adenosylcobalamin biosynthesis. Catalyzes amidations at positions B, D, E, and G on adenosylcobyrinic A,C-diamide. NH(2) groups are provided by glutamine, and one molecule of ATP is hydrogenolyzed for each amidation. The polypeptide is Cobyric acid synthase (Burkholderia vietnamiensis (strain G4 / LMG 22486) (Burkholderia cepacia (strain R1808))).